Consider the following 380-residue polypeptide: Succinyl-diaminopimelate desuccinylase (380 aa).

Zn(2+) is bound at residue H70. D72 is a catalytic residue. Zn(2+) is bound at residue D103. E137 (proton acceptor) is an active-site residue. Zn(2+) is bound by residues E138, E166, and H352.

Belongs to the peptidase M20A family. DapE subfamily. As to quaternary structure, homodimer. The cofactor is Zn(2+). Co(2+) is required as a cofactor.

The enzyme catalyses N-succinyl-(2S,6S)-2,6-diaminopimelate + H2O = (2S,6S)-2,6-diaminopimelate + succinate. It functions in the pathway amino-acid biosynthesis; L-lysine biosynthesis via DAP pathway; LL-2,6-diaminopimelate from (S)-tetrahydrodipicolinate (succinylase route): step 3/3. Its function is as follows. Catalyzes the hydrolysis of N-succinyl-L,L-diaminopimelic acid (SDAP), forming succinate and LL-2,6-diaminopimelate (DAP), an intermediate involved in the bacterial biosynthesis of lysine and meso-diaminopimelic acid, an essential component of bacterial cell walls. In Azoarcus sp. (strain BH72), this protein is Succinyl-diaminopimelate desuccinylase.